The chain runs to 1138 residues: uncharacterized protein (1138 aa).

An N-terminal signal peptide occupies residues 1–28; it reads MKLFPRSILIILVLSFALNLGLVTKTHA. 7 helical membrane passes run 331–351, 359–379, 392–412, 494–514, 520–540, 554–574, and 699–719; these read IVTAFLTLYVMFFGFKLLLAG, YINFILKMIFVTYFSIGINIT, MIQWAFPFLLDGINGLASWVM, MLVSLALSYPLLVISVAAFMV, CMISIVILGILAPLFVPMFLF, MISFLLQPMVVVTFMITMFSV, and IKNILLALVTACFTLYLMYNF. Positions 775 to 784 are enriched in gly residues; that stretch reads DLKAGQGGGV. Disordered regions lie at residues 775–914, 958–977, and 995–1071; these read DLKA…KGTG, GGGRIRDQQGEETSERRTNA, and ERDN…KQIR. Over residues 801-830 the composition is skewed to low complexity; the sequence is AASGGTSAPTVTTPTASSSVATSSPKTVSS. Residues 838 to 852 show a composition bias toward pro residues; sequence TPPPAPSEAVSPPPA. Polar residues predominate over residues 854–869; the sequence is IRTSISTPAPQSNIET. Composition is skewed to basic and acidic residues over residues 875-888, 961-977, 995-1032, and 1058-1071; these read IIRDNNQESKKEID, RIRDQQGEETSERRTNA, ERDNSVTNKFDKLADELNKSEKAKVEENKNIENDRKEN, and LKEHENPTGVKQIR.

The protein belongs to the TrbL/VirB6 family.

The protein localises to the cell membrane. This is an uncharacterized protein from Rickettsia felis (strain ATCC VR-1525 / URRWXCal2) (Rickettsia azadi).